The chain runs to 75 residues: MPQISRYSDEQVEQLLAELLNILEKHKAPTDLSLMVLGNMVTNLINTSIAPAQRQAIANSFARALQSSINEDKAH.

The protein belongs to the UPF0352 family.

This chain is UPF0352 protein YejL, found in Escherichia coli O127:H6 (strain E2348/69 / EPEC).